Consider the following 900-residue polypeptide: Sterol regulatory element-binding protein 1 (900 aa).

Residues 1–16 (MQSSIPSVSVSVASPA) show a composition bias toward low complexity. Disordered stretches follow at residues 1-49 (MQSS…TKAS) and 206-263 (TTCK…PKKT). The interval 1–440 (MQSSIPSVSV…FALPPFLMSP (440 aa)) is nuclear form of sre1; complements deletions of sre1 or scp1. Topologically, residues 1-442 (MQSSIPSVSV…LPPFLMSPFT (442 aa)) are cytoplasmic. Positions 21–32 (TKASPDSKSPNS) are enriched in polar residues. A compositionally biased stretch (low complexity) spans 35–49 (AIPSSSPLASSTKAS). The region spanning 260-332 (PKKTAHNMIE…AKATEYIRHL (73 aa)) is the bHLH domain. The helical transmembrane segment at 443–463 (GTVLFNMLKIGVVLLGLFYLL) threads the bilayer. Topologically, residues 464-509 (HDNSLFKGFKGEKKSKVSTRSSMSPSSILFRKTVFEKYCLLDHSTS) are lumenal. A helical transmembrane segment spans residues 510–530 (TISLFFGLLIFTLKSAYGYLT). The Cytoplasmic portion of the chain corresponds to 531-900 (HRLSALYTSS…QEDLGYVSSA (370 aa)). A phosphoserine mark is found at S898 and S899.

As to quaternary structure, forms a tight complex with scp1, composed of 4 copies of scp1 and 4 copies of sre1, which protects sre1 precursor from degradation by the proteasome. Post-translationally, in low oxygen or sterol conditions, undergoes proteolytic cleavage by rhomboid-type protease rbd2 and is released as soluble transcription factor from the membrane. Processed form is phosphorylated.

Its subcellular location is the endoplasmic reticulum membrane. It localises to the nucleus. Functionally, precursor of the transcription factor form (Processed sterol regulatory element-binding protein 1), which is embedded in the endoplasmic reticulum membrane. Low oxygen or sterol conditions promote processing of this form, releasing the transcription factor form that translocates into the nucleus and activates transcription of genes required for adaptation to anaerobic growth. Its function is as follows. Transcriptional activator required for transcription of genes required for adaptation to anaerobic growth like those implicated in the nonrespiratory oxygen-consumptive biosynthetic pathways of sterol, heme, sphingolipid, and ubiquinone biosynthesis. May monitor oxygen levels through sterol synthesis steps which require oxygen. The protein is Sterol regulatory element-binding protein 1 of Schizosaccharomyces pombe (strain 972 / ATCC 24843) (Fission yeast).